A 276-amino-acid chain; its full sequence is Bifunctional esterase/perhydrolase DCH (276 aa).

An AB hydrolase-1 domain is found at 23–254; sequence PVIFFHHGWP…NGKLISYPGF (232 aa). Active-site residues include S97, D227, and H256.

This sequence belongs to the AB hydrolase superfamily. Bacterial non-heme haloperoxidase / perhydrolase family. Homodimer.

It carries out the reaction 3,4-dihydrocoumarin + H2O = 3-(2-hydroxyphenyl)propanoate + H(+). It catalyses the reaction peracetic acid + H2O = acetate + H2O2 + H(+). The catalysed reaction is a percarboxylic acid + H2O = a carboxylate + H2O2 + H(+). With respect to regulation, inhibited by the serine protease inhibitors diisopropyl fluorophosphate and phenylmethanesulfonyl fluoride. In terms of biological role, multifunctional enzyme, which shows esterase and perhydrolase activities, and is capable of organic acid-assisted bromination of organic compounds. Catalyzes the hydrolysis of 3,4-dihydrocoumarin. Aromatic lactones other than 3,4-dihydrocoumarin, such as 2-coumaranone and homogentisic acid lactone, are also substrates, but their activities relative to that of 3,4-dihydrocoumarin are quite low. Also catalyzes the hydrolysis of several linear esters, with specificity toward methyl esters. In addition, shows perhydrolase activity and catalyzes the dose- and time-dependent degradation of peracetic acid, a broad-spectrum biocide, to acetic acid and hydrogen peroxide. It suggests that in vivo DCH may play a role in the oxidative stress defense system and detoxify peroxoacids in conjunction with the catalase, i.e. peroxoacids are first hydrolyzed to the corresponding acids and hydrogen peroxide by DCH, and then the resulting hydrogen peroxide is degraded by the catalase. Also shows organic acid-assisted bromination activity toward monochlorodimedon when incubated with hydrogen peroxide and dihydrocoumarin or an organic acid, such as acetate and n-butyrate. In Acinetobacter calcoaceticus, this protein is Bifunctional esterase/perhydrolase DCH.